A 379-amino-acid chain; its full sequence is Glutamate 5-kinase (379 aa).

Lys15 contributes to the ATP binding site. Substrate-binding residues include Ser56, Asp143, and Asn155. An ATP-binding site is contributed by 175 to 176; that stretch reads SD. The 78-residue stretch at 281 to 358 folds into the PUA domain; the sequence is KGTLTIDAGA…CDAAQILGIS (78 aa).

The protein belongs to the glutamate 5-kinase family.

The protein localises to the cytoplasm. It catalyses the reaction L-glutamate + ATP = L-glutamyl 5-phosphate + ADP. The protein operates within amino-acid biosynthesis; L-proline biosynthesis; L-glutamate 5-semialdehyde from L-glutamate: step 1/2. In terms of biological role, catalyzes the transfer of a phosphate group to glutamate to form L-glutamate 5-phosphate. The sequence is that of Glutamate 5-kinase from Nitrobacter hamburgensis (strain DSM 10229 / NCIMB 13809 / X14).